A 513-amino-acid chain; its full sequence is Arabinoxylan arabinofuranohydrolase (513 aa).

An N-terminal signal peptide occupies residues 1 to 26 (MRKKCSVCLWILVLLLSCLSGKSAYA). D50 functions as the Proton acceptor in the catalytic mechanism. E251 acts as the Proton donor in catalysis. N314 serves as a coordination point for substrate. A CBM6 domain is found at 382 to 511 (NRVEAETFAW…LFNFDYWQFT (130 aa)). Ca(2+) contacts are provided by E385, E387, N409, Q410, and D506.

The protein resides in the secreted. It catalyses the reaction Hydrolysis of terminal non-reducing alpha-L-arabinofuranoside residues in alpha-L-arabinosides.. Its pathway is glycan degradation; xylan degradation. Cleaves arabinose units from O-2- or O-3-monosubstituted xylose residues, thereby assisting in arabinoxylan (AX) and short-chain arabinoxylo-oligosaccharide (AXOS) degradation. Is more active on wheat bran AXOS than on wheat water-extractable AX and rye water-extractable AX. Does not display endoxylanase, xylosidase or arabinanase activity. The chain is Arabinoxylan arabinofuranohydrolase (xynD) from Bacillus subtilis (strain 168).